The sequence spans 398 residues: O-methyltransferase mpaG (398 aa).

S-adenosyl-L-methionine is bound at residue Asp-264. The Proton acceptor role is filled by His-306. Residues Glu-335 and Glu-362 contribute to the active site.

Belongs to the class I-like SAM-binding methyltransferase superfamily. Cation-independent O-methyltransferase family. COMT subfamily.

The protein localises to the cytoplasm. It is found in the cytosol. It catalyses the reaction (4E,8E)-10-(4,6-dihydroxy-7-methyl-3-oxo-1,3-dihydro-2-benzofuran-5-yl)-4,8-dimethyldeca-4,8-dienoate + S-adenosyl-L-methionine = (4E,8E)-10-(4-hydroxy-6-methoxy-7-methyl-3-oxo-1,3-dihydro-2-benzofuran-5-yl)-4,8-dimethyldeca-4,8-dienoate + S-adenosyl-L-homocysteine + H(+). It functions in the pathway secondary metabolite biosynthesis; terpenoid biosynthesis. O-methyltransferase; part of the gene cluster that mediates the biosynthesis of mycophenolic acid (MPA), the first isolated antibiotic natural product in the world obtained from a culture of Penicillium brevicompactum in 1893. MpaC methylates farnesyl-DHMP-3C (FDHMP-3C) to yield MFDHMP-3C. The first step of the pathway is the synthesis of 5-methylorsellinic acid (5MOA) by the cytosolic polyketide synthase mpaC. 5MOA is then converted to the phthalide compound 5,7-dihydroxy-4,6-dimethylphthalide (DHMP) by the endoplasmic reticulum-bound cytochrome P450 monooxygenase mpaDE. MpaDE first catalyzes hydroxylation of 5-MOA to 4,6-dihydroxy-2-(hydroxymethyl)-3-methylbenzoic acid (DHMB). MpaDE then acts as a lactone synthase that catalyzes the ring closure to convert DHMB into DHMP. The next step is the prenylation of DHMP by the Golgi apparatus-associated prenyltransferase mpaA to yield farnesyl-DHMP (FDHMP). The ER-bound oxygenase mpaB then mediates the oxidative cleavage the C19-C20 double bond in FDHMP to yield FDHMP-3C via a mycophenolic aldehyde intermediate. The O-methyltransferase mpaG catalyzes the methylation of FDHMP-3C to yield MFDHMP-3C. After the cytosolic methylation of FDHMP-3C, MFDHMP-3C enters into peroxisomes probably via free diffusion due to its low molecular weight. Upon a peroxisomal CoA ligation reaction, catalyzed by a beta-oxidation component enzyme acyl-CoA ligase ACL891, MFDHMP-3C-CoA would then be restricted to peroxisomes for the following beta-oxidation pathway steps. The peroxisomal beta-oxidation machinery than converts MFDHMP-3C-CoA into MPA_CoA, via a beta-oxidation chain-shortening process. Finally mpaH acts as a peroxisomal acyl-CoA hydrolase with high substrate specificity toward MPA-CoA to release the final product MPA. This Penicillium roqueforti (strain FM164) protein is O-methyltransferase mpaG.